Reading from the N-terminus, the 333-residue chain is Ribosomal RNA small subunit methyltransferase H (333 aa).

S-adenosyl-L-methionine contacts are provided by residues 31–33 (GGY), Asp49, Phe76, Asp134, and Gln141.

Belongs to the methyltransferase superfamily. RsmH family.

It is found in the cytoplasm. It catalyses the reaction cytidine(1402) in 16S rRNA + S-adenosyl-L-methionine = N(4)-methylcytidine(1402) in 16S rRNA + S-adenosyl-L-homocysteine + H(+). Its function is as follows. Specifically methylates the N4 position of cytidine in position 1402 (C1402) of 16S rRNA. The polypeptide is Ribosomal RNA small subunit methyltransferase H (Wolbachia sp. subsp. Brugia malayi (strain TRS)).